The following is a 328-amino-acid chain: L-lactate dehydrogenase (328 aa).

NAD(+)-binding positions include Val18, Glu39, Lys46, Tyr71, and 85–86 (GA). Substrate contacts are provided by Gln88 and Arg94. NAD(+) is bound by residues Ser107, 124-126 (AAN), and Ser149. A substrate-binding site is contributed by 126–129 (NPVD). Residue 154-157 (DSAR) participates in substrate binding. Residues Arg159 and His174 each coordinate beta-D-fructose 1,6-bisphosphate. The active-site Proton acceptor is the His181. Position 226 is a phosphotyrosine (Tyr226). Residue Thr235 participates in substrate binding.

The protein belongs to the LDH/MDH superfamily. LDH family. As to quaternary structure, homotetramer.

The protein localises to the cytoplasm. The enzyme catalyses (S)-lactate + NAD(+) = pyruvate + NADH + H(+). Its pathway is fermentation; pyruvate fermentation to lactate; (S)-lactate from pyruvate: step 1/1. Allosterically activated by fructose 1,6-bisphosphate (FBP). Its function is as follows. Catalyzes the conversion of lactate to pyruvate. This is L-lactate dehydrogenase from Streptococcus thermophilus (strain CNRZ 1066).